A 174-amino-acid polypeptide reads, in one-letter code: Gamma-crystallin C (174 aa).

2 consecutive Beta/gamma crystallin 'Greek key' domains span residues 2 to 40 (GKIT…RVDS) and 41 to 83 (GCWM…RLIP). At Cys-23 the chain carries S-methylcysteine. Residues 84–87 (HTGS) form a connecting peptide region. 2 consecutive Beta/gamma crystallin 'Greek key' domains span residues 88 to 128 (HRMR…HVLE) and 129 to 171 (GCWV…RRVV).

The protein belongs to the beta/gamma-crystallin family.

In terms of biological role, crystallins are the dominant structural components of the vertebrate eye lens. This chain is Gamma-crystallin C (Crygc), found in Rattus norvegicus (Rat).